A 68-amino-acid polypeptide reads, in one-letter code: MEC1-mediated checkpoint protein HUG1 (68 aa).

It is found in the cytoplasm. The protein resides in the nucleus. In terms of biological role, involved in the MEC1-mediated checkpoint response to DNA damage and replication arrest. The polypeptide is MEC1-mediated checkpoint protein HUG1 (HUG1) (Saccharomyces cerevisiae (strain ATCC 204508 / S288c) (Baker's yeast)).